The sequence spans 414 residues: Tyrosine--tRNA ligase (414 aa).

Tyrosine 35 serves as a coordination point for L-tyrosine. The 'HIGH' region signature appears at proline 40–histidine 49. L-tyrosine-binding residues include tyrosine 164 and glutamine 168. Positions lysine 226 to threonine 230 match the 'KMSKS' region motif. Lysine 229 contacts ATP. The region spanning threonine 347–lysine 414 is the S4 RNA-binding domain.

It belongs to the class-I aminoacyl-tRNA synthetase family. TyrS type 1 subfamily. Homodimer.

The protein localises to the cytoplasm. It catalyses the reaction tRNA(Tyr) + L-tyrosine + ATP = L-tyrosyl-tRNA(Tyr) + AMP + diphosphate + H(+). Catalyzes the attachment of tyrosine to tRNA(Tyr) in a two-step reaction: tyrosine is first activated by ATP to form Tyr-AMP and then transferred to the acceptor end of tRNA(Tyr). The protein is Tyrosine--tRNA ligase of Mycoplasma mycoides subsp. mycoides SC (strain CCUG 32753 / NCTC 10114 / PG1).